The primary structure comprises 125 residues: Small ribosomal subunit protein uS13 (125 aa).

The disordered stretch occupies residues 93–125; the sequence is RSLPVRGQRTRTNARTRKGKRKTVAGKKKAGKK.

The protein belongs to the universal ribosomal protein uS13 family. As to quaternary structure, part of the 30S ribosomal subunit. Forms a loose heterodimer with protein S19. Forms two bridges to the 50S subunit in the 70S ribosome.

Functionally, located at the top of the head of the 30S subunit, it contacts several helices of the 16S rRNA. In the 70S ribosome it contacts the 23S rRNA (bridge B1a) and protein L5 of the 50S subunit (bridge B1b), connecting the 2 subunits; these bridges are implicated in subunit movement. Contacts the tRNAs in the A and P-sites. This is Small ribosomal subunit protein uS13 from Chlorobaculum tepidum (strain ATCC 49652 / DSM 12025 / NBRC 103806 / TLS) (Chlorobium tepidum).